The primary structure comprises 440 residues: tRNA(Ile)-lysidine synthase (440 aa).

Residue 25 to 30 (SGGVDS) coordinates ATP.

The protein belongs to the tRNA(Ile)-lysidine synthase family.

It is found in the cytoplasm. It catalyses the reaction cytidine(34) in tRNA(Ile2) + L-lysine + ATP = lysidine(34) in tRNA(Ile2) + AMP + diphosphate + H(+). Its function is as follows. Ligates lysine onto the cytidine present at position 34 of the AUA codon-specific tRNA(Ile) that contains the anticodon CAU, in an ATP-dependent manner. Cytidine is converted to lysidine, thus changing the amino acid specificity of the tRNA from methionine to isoleucine. This Vibrio cholerae serotype O1 (strain ATCC 39541 / Classical Ogawa 395 / O395) protein is tRNA(Ile)-lysidine synthase.